The sequence spans 279 residues: Thymidylate synthase (279 aa).

133-134 (RR) lines the dUMP pocket. Residue Cys-154 is the Nucleophile of the active site. DUMP is bound by residues 178-181 (RSND), Asn-189, and 219-221 (HIY). (6R)-5,10-methylene-5,6,7,8-tetrahydrofolate is bound at residue Asp-181. A (6R)-5,10-methylene-5,6,7,8-tetrahydrofolate-binding site is contributed by Ala-278.

The protein belongs to the thymidylate synthase family. Bacterial-type ThyA subfamily. As to quaternary structure, homodimer.

It is found in the cytoplasm. It catalyses the reaction dUMP + (6R)-5,10-methylene-5,6,7,8-tetrahydrofolate = 7,8-dihydrofolate + dTMP. Its pathway is pyrimidine metabolism; dTTP biosynthesis. Catalyzes the reductive methylation of 2'-deoxyuridine-5'-monophosphate (dUMP) to 2'-deoxythymidine-5'-monophosphate (dTMP) while utilizing 5,10-methylenetetrahydrofolate (mTHF) as the methyl donor and reductant in the reaction, yielding dihydrofolate (DHF) as a by-product. This enzymatic reaction provides an intracellular de novo source of dTMP, an essential precursor for DNA biosynthesis. This chain is Thymidylate synthase, found in Streptococcus pyogenes serotype M3 (strain SSI-1).